A 178-amino-acid chain; its full sequence is Epididymal-specific lipocalin-9 (178 aa).

The N-terminal stretch at 1–16 is a signal peptide; sequence MVLLLVLGLVLSLATA. Residues N46, N68, and N129 are each glycosylated (N-linked (GlcNAc...) asparagine). C83 and C176 are joined by a disulfide.

Belongs to the calycin superfamily. Lipocalin family. As to expression, expressed in epididymis. Not detected in all other tissues tested.

It localises to the secreted. This chain is Epididymal-specific lipocalin-9 (Lcn9), found in Mus musculus (Mouse).